Reading from the N-terminus, the 115-residue chain is NADH-ubiquinone oxidoreductase chain 3 (115 aa).

The next 3 membrane-spanning stretches (helical) occupy residues 3–23 (VMLT…IAFW), 55–75 (FFLV…LLPL), and 84–104 (LTTM…SLAY).

The protein belongs to the complex I subunit 3 family. In terms of assembly, core subunit of respiratory chain NADH dehydrogenase (Complex I) which is composed of 45 different subunits. Interacts with TMEM186. Interacts with TMEM242.

The protein localises to the mitochondrion inner membrane. The catalysed reaction is a ubiquinone + NADH + 5 H(+)(in) = a ubiquinol + NAD(+) + 4 H(+)(out). Its function is as follows. Core subunit of the mitochondrial membrane respiratory chain NADH dehydrogenase (Complex I) which catalyzes electron transfer from NADH through the respiratory chain, using ubiquinone as an electron acceptor. Essential for the catalytic activity of complex I. The chain is NADH-ubiquinone oxidoreductase chain 3 from Canis lupus familiaris (Dog).